The primary structure comprises 510 residues: MIWHVQNENLILDSTIIFMKAFHLPLFDGSFIFPEGILIFGLILLLMIDSTSDQTDIPWFYFISSISLVMSITALLFRWREEPRILFSGNFQTNNFNEIFQFLILLCSTLCIPLSVEYIECTEMAITEFLLFVLTATLGGMFLCGANDLITIFVAPECFSLCSYLLSGYTKKDVRSNEATMKYLLMGGASSSILVHGFSWLYGSSGGEIELQEIVNGLINTQMYNSPGISIALIFITVGIGFKLSPAPSHQWTPDVYEGSPTPVVAFLSVTSKVAASASATRIFDIPFYFSSNEWHPLLEILAILSMILGNLIAITQTSMKRMLAYSSIGQIGYVIIGIIVGDANGGYASMITYMLFYISMNLGTFACIVLFGLRTGTDNIRDYAGLYTKDPFLALSLALCLLSLGGLPPLAGFFGKLHLFWCGWQAGLYFLVSIGLFTSVVSIYYYLKIIKLLMTGRKQEITPHVRNYRRSPLRSNNSIELSMIVCVIASTIPGISMNPIIAIAQDTLF.

13 helical membrane passes run 26 to 46 (LFDGSFIFPEGILIFGLILLL), 57 to 77 (IPWFYFISSISLVMSITALLF), 99 to 119 (IFQFLILLCSTLCIPLSVEYI), 124 to 144 (MAITEFLLFVLTATLGGMFLC), 149 to 169 (LITIFVAPECFSLCSYLLSGY), 183 to 203 (YLLMGGASSSILVHGFSWLYG), 227 to 247 (PGISIALIFITVGIGFKLSPA), 295 to 315 (WHPLLEILAILSMILGNLIAI), 323 to 342 (MLAYSSIGQIGYVIIGIIVG), 354 to 374 (YMLFYISMNLGTFACIVLFGL), 395 to 415 (ALSLALCLLSLGGLPPLAGFF), 418 to 438 (LHLFWCGWQAGLYFLVSIGLF), and 484 to 504 (MIVCVIASTIPGISMNPIIAI).

It belongs to the complex I subunit 2 family. As to quaternary structure, NDH is composed of at least 16 different subunits, 5 of which are encoded in the nucleus.

The protein resides in the plastid. Its subcellular location is the chloroplast thylakoid membrane. The catalysed reaction is a plastoquinone + NADH + (n+1) H(+)(in) = a plastoquinol + NAD(+) + n H(+)(out). It carries out the reaction a plastoquinone + NADPH + (n+1) H(+)(in) = a plastoquinol + NADP(+) + n H(+)(out). Its function is as follows. NDH shuttles electrons from NAD(P)H:plastoquinone, via FMN and iron-sulfur (Fe-S) centers, to quinones in the photosynthetic chain and possibly in a chloroplast respiratory chain. The immediate electron acceptor for the enzyme in this species is believed to be plastoquinone. Couples the redox reaction to proton translocation, and thus conserves the redox energy in a proton gradient. This chain is NAD(P)H-quinone oxidoreductase subunit 2 B, chloroplastic, found in Oenothera argillicola (Appalachian evening primrose).